Consider the following 346-residue polypeptide: S-adenosylmethionine:tRNA ribosyltransferase-isomerase (346 aa).

Belongs to the QueA family. As to quaternary structure, monomer.

It localises to the cytoplasm. It catalyses the reaction 7-aminomethyl-7-carbaguanosine(34) in tRNA + S-adenosyl-L-methionine = epoxyqueuosine(34) in tRNA + adenine + L-methionine + 2 H(+). It functions in the pathway tRNA modification; tRNA-queuosine biosynthesis. Functionally, transfers and isomerizes the ribose moiety from AdoMet to the 7-aminomethyl group of 7-deazaguanine (preQ1-tRNA) to give epoxyqueuosine (oQ-tRNA). The polypeptide is S-adenosylmethionine:tRNA ribosyltransferase-isomerase (Lactococcus lactis subsp. cremoris (strain MG1363)).